The following is a 216-amino-acid chain: Thymidylate kinase (216 aa).

An ATP-binding site is contributed by 10 to 17; the sequence is GIDGCGKT.

This sequence belongs to the thymidylate kinase family.

It catalyses the reaction dTMP + ATP = dTDP + ADP. Functionally, phosphorylation of dTMP to form dTDP in both de novo and salvage pathways of dTTP synthesis. This chain is Thymidylate kinase, found in Prochlorococcus marinus (strain MIT 9303).